An 869-amino-acid chain; its full sequence is DNA mismatch repair protein MutS (869 aa).

618 to 625 (GPNMGGKS) is an ATP binding site.

This sequence belongs to the DNA mismatch repair MutS family.

Its function is as follows. This protein is involved in the repair of mismatches in DNA. It is possible that it carries out the mismatch recognition step. This protein has a weak ATPase activity. The protein is DNA mismatch repair protein MutS of Zymomonas mobilis subsp. mobilis (strain ATCC 31821 / ZM4 / CP4).